Reading from the N-terminus, the 295-residue chain is Universal stress protein Mb2028c (295 aa).

Residues Gly-13, 117–123 (GSSGRGA), 131–132 (SV), Gly-165, Asp-198, 262–268 (GSHGRGG), and 276–278 (SVS) contribute to the ATP site.

This sequence belongs to the universal stress protein A family.

The polypeptide is Universal stress protein Mb2028c (Mycobacterium bovis (strain ATCC BAA-935 / AF2122/97)).